The sequence spans 908 residues: 26S proteasome non-ATPase regulatory subunit 2 (908 aa).

Methionine 1 bears the N-acetylmethionine mark. The tract at residues 1 to 51 is disordered; it reads MEEGGRDKTPVQSQQPSATTPSGADEKSSGKERRDAGEKDKEQELSEEDKQ. Threonine 9 and threonine 20 each carry phosphothreonine. The span at 10 to 22 shows a compositional bias: polar residues; sequence PVQSQQPSATTPS. A compositionally biased stretch (basic and acidic residues) spans 24–51; it reads ADEKSSGKERRDAGEKDKEQELSEEDKQ. 2 positions are modified to phosphoserine: serine 29 and serine 147. Phosphotyrosine is present on tyrosine 194. Residues serine 361 and serine 363 each carry the phosphoserine modification. PC repeat units lie at residues 409-442, 443-479, 480-514, 517-551, and 560-589; these read SAAASLGMILLWDVDGGLTQIDKYLYSSEDYIKS, GALLACGIVNSGVRNECDPALALLSDYVLHNSNTMRL, GSIFGLGLAYAGSNREDVLTLLLPVMGDSKSSMEV, VTALACGMIAVGSCNGDVTSTILQTIMEKSETELK, and LGLGLNHLGKGEAIEAILAALEVVSEPFRS. N6-acetyllysine is present on lysine 551. Over residues 623-643 the composition is skewed to basic and acidic residues; it reads KEKEEDKDKKEKKDKDKKEAP. Residues 623-645 form a disordered region; it reads KEKEEDKDKKEKKDKDKKEAPAD. PC repeat units lie at residues 692 to 723 and 742 to 757; these read LALALISVSNPRLNILDTLSKFSHDADPEVSY and AAMLRQLAQYHAKDPN. The segment at 708–903 is required for interaction with UBLCP1; the sequence is DTLSKFSHDA…LEGFVILRKN (196 aa).

It belongs to the proteasome subunit S2 family. Component of the 19S proteasome regulatory particle complex. The 26S proteasome consists of a 20S core particle (CP) and two 19S regulatory subunits (RP). The regulatory particle is made of a lid composed of 9 subunits, a base containing 6 ATPases and few additional components including PSMD2. Interacts with RPGRIP1L. Interacts with CRY1 in a KDM8-dependent manner. Interacts (via C-terminus) with phosphatase UBLCP1 (via ubiquitin-like domain); the interaction recruits UBLCP1 to the 19S regulatory particle where it dephosphorylates 19S subunit PSMC2/RPT1 which impairs PSMC2 ATPase activity and disrupts 26S proteasome assembly.

Its function is as follows. Component of the 26S proteasome, a multiprotein complex involved in the ATP-dependent degradation of ubiquitinated proteins. This complex plays a key role in the maintenance of protein homeostasis by removing misfolded or damaged proteins, which could impair cellular functions, and by removing proteins whose functions are no longer required. Therefore, the proteasome participates in numerous cellular processes, including cell cycle progression, apoptosis, or DNA damage repair. In terms of biological role, binds to the intracellular domain of tumor necrosis factor type 1 receptor. The binding domain of TRAP1 and TRAP2 resides outside the death domain of TNFR1. The sequence is that of 26S proteasome non-ATPase regulatory subunit 2 (Psmd2) from Mus musculus (Mouse).